The following is a 200-amino-acid chain: Probable molybdenum cofactor guanylyltransferase (200 aa).

Residues 9–11 (LAG), lysine 21, aspartate 69, and aspartate 100 contribute to the GTP site. Aspartate 100 is a Mg(2+) binding site.

It belongs to the MobA family. Mg(2+) is required as a cofactor.

The protein localises to the cytoplasm. The enzyme catalyses Mo-molybdopterin + GTP + H(+) = Mo-molybdopterin guanine dinucleotide + diphosphate. Transfers a GMP moiety from GTP to Mo-molybdopterin (Mo-MPT) cofactor (Moco or molybdenum cofactor) to form Mo-molybdopterin guanine dinucleotide (Mo-MGD) cofactor. The polypeptide is Probable molybdenum cofactor guanylyltransferase (Bacillus cereus (strain G9842)).